Consider the following 322-residue polypeptide: Solute carrier family 25 member 16 (322 aa).

Solcar repeat units lie at residues Phe-34–Phe-120, Ser-128–Val-219, and Leu-241–Phe-322.

It belongs to the mitochondrial carrier (TC 2.A.29) family.

The protein localises to the mitochondrion inner membrane. May be involved in the transport of coenzyme A in the mitochondrial matrix. Very little is known about the physiological function of this carrier. This is Solute carrier family 25 member 16 from Rattus norvegicus (Rat).